The primary structure comprises 359 residues: 5-formaminoimidazole-4-carboxamide-1-(beta)-D-ribofuranosyl 5'-monophosphate synthetase (359 aa).

Residues H28 and S95 each contribute to the 5-amino-1-(5-phospho-beta-D-ribosyl)imidazole-4-carboxamide site. In terms of domain architecture, ATP-grasp spans 115 to 346 (ELMIWETDRD…MGRRIAREIK (232 aa)). Residues 144–206 (PEEI…ANIY) and E228 each bind ATP. A 5-amino-1-(5-phospho-beta-D-ribosyl)imidazole-4-carboxamide-binding site is contributed by N256. Mg(2+) contacts are provided by E295 and E308.

Belongs to the phosphohexose mutase family. It depends on Mg(2+) as a cofactor. The cofactor is Mn(2+).

It carries out the reaction 5-amino-1-(5-phospho-beta-D-ribosyl)imidazole-4-carboxamide + formate + ATP = 5-formamido-1-(5-phospho-D-ribosyl)imidazole-4-carboxamide + ADP + phosphate. It functions in the pathway purine metabolism; IMP biosynthesis via de novo pathway; 5-formamido-1-(5-phospho-D-ribosyl)imidazole-4-carboxamide from 5-amino-1-(5-phospho-D-ribosyl)imidazole-4-carboxamide (formate route): step 1/1. Functionally, catalyzes the ATP- and formate-dependent formylation of 5-aminoimidazole-4-carboxamide-1-beta-d-ribofuranosyl 5'-monophosphate (AICAR) to 5-formaminoimidazole-4-carboxamide-1-beta-d-ribofuranosyl 5'-monophosphate (FAICAR) in the absence of folates. The chain is 5-formaminoimidazole-4-carboxamide-1-(beta)-D-ribofuranosyl 5'-monophosphate synthetase from Archaeoglobus fulgidus (strain ATCC 49558 / DSM 4304 / JCM 9628 / NBRC 100126 / VC-16).